A 392-amino-acid polypeptide reads, in one-letter code: MVNVEAIRKVQRAEGPATIMAIGTSTPPNAVDQSEYPDYYYFGSPTASTRPSSRRSFKRMCEKSMIKKRYMYLTETYWKRIQMFVPTWLLPLKARQDMVVVEVPKLGKEVQPKAIKGMGQPKSKINPLVFCTTSGVDMPGADYQLTKVFGLPPSVKRLMMYQQGCFAGGTVLRLAKDLAENNKGARVLVVCSEITAVTFRGPSDTHLDSLVGQALFGDGAAALIVGADPVPGVENPMFELVSAGQTILPDSDGAIDGHLREVGLTFHLLKVVPGLISKNIEKSLVEAFEPLGISDWNSLFWIAHPGGPAILDPGGDQTRPEARESCGNQACFSVSMATCQVFVCSSFSTRCEGSPKEEGLKTTGEGIEWGVLFGFGPGLTVETVVLHSLPTH.

Cys-165 is a catalytic residue.

This sequence belongs to the thiolase-like superfamily. Chalcone/stilbene synthases family.

The enzyme catalyses (E)-4-coumaroyl-CoA + 3 malonyl-CoA + 3 H(+) = 2',4,4',6'-tetrahydroxychalcone + 3 CO2 + 4 CoA. It participates in secondary metabolite biosynthesis; flavonoid biosynthesis. In terms of biological role, the primary product of this enzyme is 4,2',4',6'-tetrahydroxychalcone (also termed naringenin-chalcone or chalcone) which can under specific conditions spontaneously isomerize into naringenin. The chain is Chalcone synthase (CHS) from Persea americana (Avocado).